Here is a 218-residue protein sequence, read N- to C-terminus: Chromophore lyase CpcT/CpeT 1 (218 aa).

This sequence belongs to the CpcT/CpeT biliprotein lyase family.

Covalently attaches a chromophore to Cys residue(s) of phycobiliproteins. The sequence is that of Chromophore lyase CpcT/CpeT 1 from Synechococcus sp. (strain JA-3-3Ab) (Cyanobacteria bacterium Yellowstone A-Prime).